The following is a 386-amino-acid chain: 3-ketoacyl-CoA thiolase (386 aa).

Cys91 (acyl-thioester intermediate) is an active-site residue. Active-site proton acceptor residues include His342 and Cys372.

The protein belongs to the thiolase-like superfamily. Thiolase family. Heterotetramer of two alpha chains (FadB) and two beta chains (FadA).

It localises to the cytoplasm. It carries out the reaction an acyl-CoA + acetyl-CoA = a 3-oxoacyl-CoA + CoA. It participates in lipid metabolism; fatty acid beta-oxidation. Functionally, catalyzes the final step of fatty acid oxidation in which acetyl-CoA is released and the CoA ester of a fatty acid two carbons shorter is formed. This Pseudoalteromonas atlantica (strain T6c / ATCC BAA-1087) protein is 3-ketoacyl-CoA thiolase.